The following is a 423-amino-acid chain: MKAELIAVGTEILTGQIVNTNAQFLSEKMAELGIDVYFQTAVGDNEERLLSVITTASQRSDLVILCGGLGPTKDDLTKQTLAKYLRKDLVYDEQACQKLDDFFAKRKPSSRTPNNERQAQVIEGSIPLPNKTGLAVGGFITVDGISYVVLPGPPSELKSMVNEELVPLLSKQYSTLYSKVLRFFGVGESQLVTVLSDFIENQTDPTIAPYAKTGEVTLRLSTKTENQALADKKLGQLEAQLLSRKTLEGQPLADVFYGYGEDNSLARETFELLVKYDKTITAAESLTAGLFQSTLASFPGASQVFNGGFVAYSMEEKAKMLGLPLEELKSHGVVSAYTAEGMAEQARLLTGADIGVSLTGVAGPDMLEEQPAGTVFIGLATQTKVESIKVLISGQSRLDVRYIATLHAFNMVRKTLLKLENLL.

Belongs to the CinA family.

This Streptococcus pyogenes serotype M6 (strain ATCC BAA-946 / MGAS10394) protein is Putative competence-damage inducible protein.